The following is a 56-amino-acid chain: Large ribosomal subunit protein bL33 (56 aa).

This sequence belongs to the bacterial ribosomal protein bL33 family.

The protein is Large ribosomal subunit protein bL33 of Anaplasma phagocytophilum (strain HZ).